The primary structure comprises 110 residues: U12-hexatoxin-Hi1a (110 aa).

The signal sequence occupies residues 1 to 18 (MRVALVFLVLSILAATHG). 3 cysteine pairs are disulfide-bonded: C72/C86, C79/C91, and C85/C104.

Expressed by the venom gland.

The protein localises to the secreted. In terms of biological role, probable ion channel inhibitor. The sequence is that of U12-hexatoxin-Hi1a from Hadronyche infensa (Fraser island funnel-web spider).